Reading from the N-terminus, the 1146-residue chain is Ankyrin repeat and fibronectin type-III domain-containing protein 1 (1146 aa).

ANK repeat units lie at residues 133–162 and 170–199; these read QGNE…PEEL and EGLT…RESP. Residues 270–366 enclose the Fibronectin type-III domain; that stretch reads MPTNVCLMVT…TTTPACASPS (97 aa). The interval 607 to 614 is highly conserved peptide sequence; that stretch reads GLYLGYLK. Disordered regions lie at residues 855–887, 945–964, and 1106–1146; these read NSTS…QPCS, VKTP…NPDH, and PWAS…SSML. A compositionally biased stretch (polar residues) spans 1131–1146; sequence EGPTASPMSEILSSML.

May play a role in neuronal function. This chain is Ankyrin repeat and fibronectin type-III domain-containing protein 1, found in Homo sapiens (Human).